Consider the following 105-residue polypeptide: dATP/dGTP diphosphohydrolase (105 aa).

This sequence belongs to the Caudovirales dATP/dGTP diphosphohydrolase family. Requires Co(2+) as cofactor.

The catalysed reaction is dGTP + H2O = dGMP + diphosphate + H(+). It catalyses the reaction dATP + H2O = dAMP + diphosphate + H(+). Its pathway is purine metabolism. Catalyzes the hydrolysis of dGTP into dGMP, which is needed among other for the first step of biosynthesis of dZTP (2-amino-2'-deoxyadenosine-5'-triphosphate). This chain is dATP/dGTP diphosphohydrolase, found in Cyanophage S-2L (Cyanobacteria phage S-2L).